Consider the following 310-residue polypeptide: Mitochondrial citrate transporter E (310 aa).

Solcar repeat units follow at residues 2-95, 107-199, and 208-293; these read STTT…LRQG, QSLG…AKRR, and DGPG…TNKI. A run of 6 helical transmembrane segments spans residues 8 to 28, 72 to 92, 114 to 133, 178 to 198, 211 to 228, and 265 to 286; these read FIAG…FETV, GSAY…YEPL, LAGA…FFLV, AMVR…FAKR, GLHL…CCVM, and IYKG…TLSL.

This sequence belongs to the mitochondrial carrier (TC 2.A.29) family.

The protein resides in the mitochondrion inner membrane. In terms of biological role, mitochondrial transporter that does not mediate citrate export from mitochondria to cytoplasm. Its exact function has still to be determined. The polypeptide is Mitochondrial citrate transporter E (Aspergillus niger (strain ATCC 1015 / CBS 113.46 / FGSC A1144 / LSHB Ac4 / NCTC 3858a / NRRL 328 / USDA 3528.7)).